The primary structure comprises 243 residues: Bidirectional sugar transporter SWEET2a (243 aa).

Residues 1-15 (MMNALGLSVAATSTG) form the signal peptide. At 16–24 (SPFHDVCCY) the chain is on the extracellular side. A helical membrane pass occupies residues 25 to 45 (GAGIAGNIFALVLFISPLPTF). The region spanning 27-112 (GIAGNIFALV…ATFIAFADAK (86 aa)) is the MtN3/slv 1 domain. The Cytoplasmic portion of the chain corresponds to 46 to 56 (KRIVRNGSTEQ). Residues 57–79 (FSAMPYIYSLLNCLICLWYGLPF) traverse the membrane as a helical segment. At 80 to 90 (VSYGVVLVATV) the chain is on the extracellular side. Residues 91 to 111 (NSIGALFQLAYTATFIAFADA) form a helical membrane-spanning segment. At 112-118 (KNRVKVS) the chain is on the cytoplasmic side. A helical membrane pass occupies residues 119-139 (SLLVMVFGVFALIVYVSLALF). Residues 140 to 146 (DHQTRQL) lie on the Extracellular side of the membrane. A helical membrane pass occupies residues 147–167 (FVGYLSVASLIFMFASPLSII). The region spanning 147–229 (FVGYLSVASL…QLVLYGYFRK (83 aa)) is the MtN3/slv 2 domain. Residues 168 to 180 (NLVIRTKSVEYMP) lie on the Cytoplasmic side of the membrane. The chain crosses the membrane as a helical span at residues 181 to 201 (FYLSLSMFLMSVSFFAYGVLL). Residues 202 to 203 (HD) lie on the Extracellular side of the membrane. Residues 204 to 224 (FFIYIPNGIGTVLGVIQLVLY) form a helical membrane-spanning segment. Over 225–243 (GYFRKGSREDSLPLLVTHT) the chain is Cytoplasmic.

Belongs to the SWEET sugar transporter family. As to quaternary structure, forms homooligomers and/or heterooligomers.

The protein resides in the cell membrane. Its function is as follows. Mediates both low-affinity uptake and efflux of sugar across the plasma membrane. This chain is Bidirectional sugar transporter SWEET2a (SWEET2A), found in Oryza sativa subsp. indica (Rice).